A 296-amino-acid chain; its full sequence is Claudin-23 (296 aa).

The Cytoplasmic portion of the chain corresponds to 1-2; the sequence is MR. A helical transmembrane segment spans residues 3–23; sequence TPVVMTLGMVLTPCGLLLNLV. Over 24-81 the chain is Extracellular; it reads STLAPGWRLVKGFLDQPVDVVLYQGLWDICREQSSRERECGQPDEWNYFQTQPVQVAR. The helical transmembrane segment at 82–102 threads the bilayer; the sequence is GLMITSLATTALGLLLASLGV. Over 103–111 the chain is Cytoplasmic; the sequence is RCWQDEPHY. Residues 112 to 132 form a helical membrane-spanning segment; sequence GLAGLSGVVFFVAGLFSLIPV. Residues 133–160 lie on the Extracellular side of the membrane; that stretch reads SWYNHFLSDPDVLAAPSSPVTVQVSYSL. Residues 161 to 181 form a helical membrane-spanning segment; the sequence is VLGYLGSCLLLLGGFSLALSF. Topologically, residues 182 to 296 are cytoplasmic; the sequence is APWCEERCRR…QNSLPCDSDL (115 aa). The disordered stretch occupies residues 224–296; it reads YSDGQHRPPP…QNSLPCDSDL (73 aa). Over residues 273 to 284 the composition is skewed to low complexity; the sequence is TSQGGSSSRSTR. Positions 285–296 are enriched in polar residues; sequence PCQNSLPCDSDL.

The protein belongs to the claudin family.

It localises to the cell junction. It is found in the tight junction. The protein localises to the cell membrane. Functionally, plays a major role in tight junction-specific obliteration of the intercellular space, through calcium-independent cell-adhesion activity. The protein is Claudin-23 (Cldn23) of Mus musculus (Mouse).